A 525-amino-acid polypeptide reads, in one-letter code: Serine/threonine protein phosphatase 2A 55 kDa regulatory subunit B beta isoform (525 aa).

The tract at residues 1–30 (MDPSSKSPDDDDLRPEAEAARRPQPQPQPR) is disordered. WD repeat units follow at residues 48–87 (QEVD…DSAS) and 124–165 (EIEE…VKRI). A disordered region spans residues 169–191 (NLNTSQSSGNGTTSSSSSSSSRA). Residues 171-189 (NTSQSSGNGTTSSSSSSSS) are compositionally biased toward low complexity. WD repeat units follow at residues 244-282 (AHDY…QSFN), 293-333 (DLTE…LCDN), 352-390 (EIIA…GPVA), and 495-525 (DLST…MYYA).

It belongs to the phosphatase 2A regulatory subunit B family. As to quaternary structure, PP2A consists of a common heteromeric enzyme, composed of a catalytic subunit (subunits C), a constant regulatory subunit (subunit A), and a variety of regulatory subunits such as subunits B (the R2/B/PR55/B55, R3/B''/PR72/PR130/PR59 and R5/B'/B56 families).

The B regulatory subunit may modulate substrate selectivity and catalytic activity, and may also direct the localization of the catalytic enzyme to a particular subcellular compartment. In Oryza sativa subsp. japonica (Rice), this protein is Serine/threonine protein phosphatase 2A 55 kDa regulatory subunit B beta isoform.